The following is a 411-amino-acid chain: LIM domain-binding protein 1 (411 aa).

Residue serine 2 is modified to N-acetylserine. Position 61 is a phosphothreonine (threonine 61). Phosphoserine occurs at positions 265 and 302. 2 disordered regions span residues 284–330 (PPAE…TFAL) and 367–411 (DAAN…QASQ). The span at 302–318 (SGGSTMSSGGGNTNNSN) shows a compositional bias: low complexity. An LIM interaction domain (LID) domain is found at 336–375 (DVMVVGEPTLMGGEFGDEDERLITRLENTQFDAANGIDDE).

The protein belongs to the LDB family. As to quaternary structure, interacts with ESR1. Forms homodimers and heterodimers. Interacts with and activates LHX1/LIM1. Interacts with the LIM domains of ISL1 and LMO2. Can assemble in a complex with LMO2 and TAL1/SCL but does not interact with TAL1/SCL directly. Strongly interacts with the LIM2 domain of LMX1A and more weakly with the LIM1 domain. Homodimerization is not required for, and does not effect, LMX1A-binding. Component of a nuclear TAL-1 complex composed at least of CBFA2T3, LDB1, TAL1 and TCF3. Interacts with LHX6 and LHX9. At neuronal promoters, forms a complex with LHX3 involved in the specification of interneurons, in motor neurons, it is displaced by ISL1 to form a ternary complex in which ISL1 contacts both LHX3 and LDB1. Interacts with SLK; leading to negatively regulate SLK kinase activity. Interacts with YWHAZ. Interacts with PRDM1/BLIMP1. Interacts with LMO4. Interacts with RLIM/RNF12; the interaction inhibits the ubiquitination of LMO proteins. In terms of processing, ubiquitinated by RLIM/RNF12, leading to its degradation by the proteasome. As to expression, expressed in multiple adult tissues including heart, brain, liver, kidney, testis, lung and muscle, with expression highest in the pituitary gland and skin.

It is found in the nucleus. Its function is as follows. Binds to the LIM domain of a wide variety of LIM domain-containing transcription factors. May regulate the transcriptional activity of LIM-containing proteins by determining specific partner interactions. Plays a role in the development of interneurons and motor neurons in cooperation with LHX3 and ISL1. Acts synergistically with LHX1/LIM1 in axis formation and activation of gene expression. Acts with LMO2 in the regulation of red blood cell development, maintaining erythroid precursors in an immature state. The chain is LIM domain-binding protein 1 (Ldb1) from Mus musculus (Mouse).